The chain runs to 169 residues: Small ribosomal subunit protein uS5 (169 aa).

The region spanning 14-77 (LQEKLVAVRR…EQARKNMRKV (64 aa)) is the S5 DRBM domain.

Belongs to the universal ribosomal protein uS5 family. As to quaternary structure, part of the 30S ribosomal subunit. Contacts proteins S4 and S8.

With S4 and S12 plays an important role in translational accuracy. Its function is as follows. Located at the back of the 30S subunit body where it stabilizes the conformation of the head with respect to the body. The sequence is that of Small ribosomal subunit protein uS5 from Methylococcus capsulatus (strain ATCC 33009 / NCIMB 11132 / Bath).